The sequence spans 411 residues: Argininosuccinate synthase (411 aa).

ATP contacts are provided by residues 13 to 21 (AYSGGLDTS) and alanine 40. Residues tyrosine 91 and serine 96 each contribute to the L-citrulline site. Glycine 121 lines the ATP pocket. 3 residues coordinate L-aspartate: threonine 123, asparagine 127, and aspartate 128. Residue asparagine 127 participates in L-citrulline binding. Residues arginine 131, serine 182, serine 191, glutamate 267, and tyrosine 279 each contribute to the L-citrulline site.

The protein belongs to the argininosuccinate synthase family. Type 1 subfamily. As to quaternary structure, homotetramer.

It localises to the cytoplasm. It catalyses the reaction L-citrulline + L-aspartate + ATP = 2-(N(omega)-L-arginino)succinate + AMP + diphosphate + H(+). It participates in amino-acid biosynthesis; L-arginine biosynthesis; L-arginine from L-ornithine and carbamoyl phosphate: step 2/3. This is Argininosuccinate synthase from Bartonella tribocorum (strain CIP 105476 / IBS 506).